A 204-amino-acid chain; its full sequence is ADP-ribosylation factor-like protein 15 (204 aa).

Residues 39 to 46, 82 to 86, and 142 to 145 each bind GTP; these read GLTGSGKT, ELGGA, and NHQD.

It belongs to the small GTPase superfamily. Arf family.

This Homo sapiens (Human) protein is ADP-ribosylation factor-like protein 15 (ARL15).